The chain runs to 152 residues: Methylglyoxal synthase (152 aa).

The 147-residue stretch at 6–152 (RKISARKSIA…YDGYLAERLA (147 aa)) folds into the MGS-like domain. Residues H19, K23, 45 to 48 (TGTT), and 65 to 66 (SG) contribute to the substrate site. Catalysis depends on D71, which acts as the Proton donor/acceptor. Residue H98 participates in substrate binding.

It belongs to the methylglyoxal synthase family.

The enzyme catalyses dihydroxyacetone phosphate = methylglyoxal + phosphate. Functionally, catalyzes the formation of methylglyoxal from dihydroxyacetone phosphate. In Actinobacillus pleuropneumoniae serotype 3 (strain JL03), this protein is Methylglyoxal synthase.